Consider the following 311-residue polypeptide: Methionyl-tRNA formyltransferase (311 aa).

Residue 112-115 coordinates (6S)-5,6,7,8-tetrahydrofolate; sequence SLLP.

It belongs to the Fmt family.

The enzyme catalyses L-methionyl-tRNA(fMet) + (6R)-10-formyltetrahydrofolate = N-formyl-L-methionyl-tRNA(fMet) + (6S)-5,6,7,8-tetrahydrofolate + H(+). Attaches a formyl group to the free amino group of methionyl-tRNA(fMet). The formyl group appears to play a dual role in the initiator identity of N-formylmethionyl-tRNA by promoting its recognition by IF2 and preventing the misappropriation of this tRNA by the elongation apparatus. The protein is Methionyl-tRNA formyltransferase of Agrobacterium fabrum (strain C58 / ATCC 33970) (Agrobacterium tumefaciens (strain C58)).